Reading from the N-terminus, the 426-residue chain is Actin-like protein 6B (426 aa).

The tract at residues 39-82 is essential for mediating its function in dendritic development; may contribute to neuronal-specific targeting; it reads TTVGLLAAEEGGGLELEGDKEKKGKIFHIDTNALHVPRDGAEVM.

It belongs to the actin family. In terms of assembly, component of the multiprotein chromatin-remodeling complexes SWI/SNF: SWI/SNF-A (BAF), SWI/SNF-B (PBAF) and related complexes. The canonical complex contains a catalytic subunit (either SMARCA4/BRG1/BAF190A or SMARCA2/BRM/BAF190B) and at least SMARCE1, ACTL6A/BAF53, SMARCC1/BAF155, SMARCC2/BAF170 and SMARCB1/SNF5/BAF47. Other subunits specific to each of the complexes may also be present permitting several possible combinations developmentally and tissue specific. Component of the BAF complex, which includes at least actin (ACTB), ARID1A/BAF250A, ARID1B/BAF250B, SMARCA2/BRM, SMARCA4/BRG1/BAF190A, ACTL6A/BAF53, ACTL6B/BAF53B, SMARCE1/BAF57, SMARCC1/BAF155, SMARCC2/BAF170, SMARCB1/SNF5/INI1 and one or more SMARCD1/BAF60A, SMARCD2/BAF60B, or SMARCD3/BAF60C. Component of neuron-specific chromatin remodeling complex (nBAF complex) composed of at least, ARID1A/BAF250A or ARID1B/BAF250B, SMARCD1/BAF60A or SMARCD2/BAF60B or SMARCD3/BAF60C, SMARCA2/BRM/BAF190B, SMARCA4/BRG1/BAF190A, SMARCB1/BAF47, SMARCC1/BAF155, SMARCE1/BAF57, SMARCC2/BAF170, DPF1/BAF45B, DPF3/BAF45C, ACTL6B/BAF53B and actin (ACTB). Note that the nBAF complex is polymorphic in regard to the ATPase, SMARCA2 and SMARCA4 occupying mutually exclusive positions. May be a component of the SWI/SNF-B (PBAF) chromatin remodeling complex, at least composed of SMARCA4/BRG1, SMARCB1/BAF47/SNF5, ACTL6A/BAF53A or ACTL6B/BAF53B, SMARCE1/BAF57, SMARCD1/BAF60A, SMARCD2/BAF60B, perhaps SMARCD3/BAF60C, SMARCC1/BAF155, SMARCC2/BAF170, PBRM1/BAF180, ARID2/BAF200 and actin.

It is found in the nucleus. Functionally, involved in transcriptional activation and repression of select genes by chromatin remodeling (alteration of DNA-nucleosome topology). Component of SWI/SNF chromatin remodeling complexes that carry out key enzymatic activities, changing chromatin structure by altering DNA-histone contacts within a nucleosome in an ATP-dependent manner. Belongs to the neuron-specific chromatin remodeling complex (nBAF complex), as such plays a role in remodeling mononucleosomes in an ATP-dependent fashion, and is required for postmitotic neural development and dendritic outgrowth. During neural development a switch from a stem/progenitor to a postmitotic chromatin remodeling mechanism occurs as neurons exit the cell cycle and become committed to their adult state. The transition from proliferating neural stem/progenitor cells to postmitotic neurons requires a switch in subunit composition of the npBAF and nBAF complexes. As neural progenitors exit mitosis and differentiate into neurons, npBAF complexes which contain ACTL6A/BAF53A and PHF10/BAF45A, are exchanged for homologous alternative ACTL6B/BAF53B and DPF1/BAF45B or DPF3/BAF45C subunits in neuron-specific complexes (nBAF). The npBAF complex is essential for the self-renewal/proliferative capacity of the multipotent neural stem cells. The nBAF complex along with CREST plays a role regulating the activity of genes essential for dendrite growth. ACTL6B/BAF53B is not essential for assembly of the nBAF complex but is required for targeting the complex and CREST to the promoter of genes essential for dendritic growth. Essential for neuronal maturation and dendrite development. This chain is Actin-like protein 6B, found in Homo sapiens (Human).